Consider the following 414-residue polypeptide: NADH kinase POS5, mitochondrial (414 aa).

Belongs to the NAD kinase family.

Its subcellular location is the mitochondrion matrix. It carries out the reaction NADH + ATP = ADP + NADPH + H(+). Its function is as follows. Phosphorylates both NADH and NAD(+), with a twofold preference for NADH. Anti-oxidant factor and key source of the cellular reductant NADPH. This chain is NADH kinase POS5, mitochondrial (POS5), found in Saccharomyces cerevisiae (strain ATCC 204508 / S288c) (Baker's yeast).